The following is a 923-amino-acid chain: Immunomodulating metalloprotease (923 aa).

An N-terminal signal peptide occupies residues 1–41; sequence MSLSTTAFPSLQGENMSRSPIPRHRALLAGFCLAGALSAQA. The Peptidase M60 domain maps to 450–794; it reads QGFTAIGRMA…FYTQWVHYWA (345 aa). Histidine 696 serves as a coordination point for Zn(2+). The active site involves glutamate 697. Residue histidine 700 coordinates Zn(2+).

It belongs to the peptidase M88 family. Requires Zn(2+) as cofactor.

The protein localises to the secreted. Its activity is regulated as follows. Proteolytic activity is blocked in the presence of EDTA. Functionally, protease that degrades several proteins of the host immune system. Cleaves P-selectin glycoprotein ligand-1 (PSGL-1), leading to its functional inhibition; PSGL-1 is a leukocyte cell-surface receptor essential for leukocyte recruitment to the site of infection. Next to PSGL-1, targets host CD43 and CD44 that are also involved in leukocyte homing. Thus, prevents neutrophil extravasation and thereby protects P.aeruginosa from neutrophil attack. Is also able to inhibit the decay accelerating factor (CD55), but not the cell-surface receptors CD46 and CD31. This chain is Immunomodulating metalloprotease, found in Pseudomonas aeruginosa (strain ATCC 15692 / DSM 22644 / CIP 104116 / JCM 14847 / LMG 12228 / 1C / PRS 101 / PAO1).